Reading from the N-terminus, the 229-residue chain is Heptaprenylglyceryl phosphate synthase (229 aa).

Lys12 lines the sn-glycerol 1-phosphate pocket. Residues Asp14 and Ser40 each contribute to the Mg(2+) site. Sn-glycerol 1-phosphate is bound by residues 159–164 (YLEYSG), Gly189, and 209–210 (GN).

Belongs to the GGGP/HepGP synthase family. Group I subfamily. In terms of assembly, homodimer. It depends on Mg(2+) as a cofactor.

The catalysed reaction is sn-glycerol 1-phosphate + all-trans-heptaprenyl diphosphate = 3-heptaprenyl-sn-glycero-1-phosphate + diphosphate. It participates in membrane lipid metabolism; glycerophospholipid metabolism. In terms of biological role, prenyltransferase that catalyzes in vivo the transfer of the heptaprenyl moiety of heptaprenyl pyrophosphate (HepPP; 35 carbon atoms) to the C3 hydroxyl of sn-glycerol-1-phosphate (G1P), producing heptaprenylglyceryl phosphate (HepGP). This reaction is an ether-bond-formation step in the biosynthesis of archaea-type G1P-based membrane lipids found in Bacillales. This chain is Heptaprenylglyceryl phosphate synthase, found in Bacillus cereus (strain ATCC 14579 / DSM 31 / CCUG 7414 / JCM 2152 / NBRC 15305 / NCIMB 9373 / NCTC 2599 / NRRL B-3711).